The primary structure comprises 237 residues: Methylthioribulose-1-phosphate dehydratase (237 aa).

Cys-98 contributes to the substrate binding site. Residues His-116 and His-118 each coordinate Zn(2+). Catalysis depends on Glu-140, which acts as the Proton donor/acceptor. His-196 is a binding site for Zn(2+).

Belongs to the aldolase class II family. MtnB subfamily. Zn(2+) serves as cofactor.

It localises to the cytoplasm. It carries out the reaction 5-(methylsulfanyl)-D-ribulose 1-phosphate = 5-methylsulfanyl-2,3-dioxopentyl phosphate + H2O. The protein operates within amino-acid biosynthesis; L-methionine biosynthesis via salvage pathway; L-methionine from S-methyl-5-thio-alpha-D-ribose 1-phosphate: step 2/6. Functionally, catalyzes the dehydration of methylthioribulose-1-phosphate (MTRu-1-P) into 2,3-diketo-5-methylthiopentyl-1-phosphate (DK-MTP-1-P). In Laccaria bicolor (strain S238N-H82 / ATCC MYA-4686) (Bicoloured deceiver), this protein is Methylthioribulose-1-phosphate dehydratase.